A 518-amino-acid chain; its full sequence is GMP synthase [glutamine-hydrolyzing] (518 aa).

The region spanning 13 to 203 (KIIVLDFGSQ…ALNVCGCKGD (191 aa)) is the Glutamine amidotransferase type-1 domain. The active-site Nucleophile is the C90. Active-site residues include H177 and E179. In terms of domain architecture, GMPS ATP-PPase spans 204–393 (WTMENFSEVE…LGMPDAIVWR (190 aa)). 231 to 237 (SGGVDSS) serves as a coordination point for ATP.

In terms of assembly, homodimer.

It carries out the reaction XMP + L-glutamine + ATP + H2O = GMP + L-glutamate + AMP + diphosphate + 2 H(+). The protein operates within purine metabolism; GMP biosynthesis; GMP from XMP (L-Gln route): step 1/1. In terms of biological role, catalyzes the synthesis of GMP from XMP. This chain is GMP synthase [glutamine-hydrolyzing], found in Listeria monocytogenes serovar 1/2a (strain ATCC BAA-679 / EGD-e).